Here is a 147-residue protein sequence, read N- to C-terminus: Histidine-containing phosphotransfer protein 1 (147 aa).

Positions 38 to 133 (APDFVSEVVT…YDLRNKFQAM (96 aa)) constitute an HPt domain. At H79 the chain carries Phosphohistidine.

Post-translationally, two-component system major event consists of a His-to-Asp phosphorelay between a sensor histidine kinase (HK) and a response regulator (RR). In plants, the His-to-Asp phosphorelay involves an additional intermediate named Histidine-containing phosphotransfer protein (HPt). This multistep phosphorelay consists of a His-Asp-His-Asp sequential transfer of a phosphate group between first a His and an Asp of the HK protein, followed by the transfer to a conserved His of the HPt protein and finally the transfer to an Asp in the receiver domain of the RR protein. As to expression, widely expressed.

It is found in the cytoplasm. Its subcellular location is the cytosol. The protein localises to the nucleus. Functions as a two-component phosphorelay mediators between cytokinin sensor histidine kinases and response regulators (B-type ARRs). Plays an important role in propagating cytokinin signal transduction through the multistep His-to-Asp phosphorelay. Functions as a positive regulator of the cytokinin signaling pathway. May play a regulatory role in salt and drought tolerance during plant development. This Oryza sativa subsp. japonica (Rice) protein is Histidine-containing phosphotransfer protein 1.